The following is a 344-amino-acid chain: KRR1 small subunit processome component homolog (344 aa).

In terms of domain architecture, KH spans 126-194 (DIIKIGNLVH…VRDIVLDTMN (69 aa)). The span at 230–246 (KNKNISKRKQPKNKKPK) shows a compositional bias: basic residues. Residues 230–326 (KNKNISKRKQ…KRAAEDNKVD (97 aa)) form a disordered region. Positions 271–344 (FLNKEQKQAK…MKANKKKERS (74 aa)) form a coiled coil. Over residues 272 to 303 (LNKEQKQAKRQQERTAKQAEAAKKQDERRNKD) the composition is skewed to basic and acidic residues.

The protein belongs to the KRR1 family. In terms of assembly, monomer. Component of the ribosomal small subunit (SSU) processome.

Its subcellular location is the nucleus. The protein resides in the nucleolus. Its function is as follows. Required for 40S ribosome biogenesis. Involved in nucleolar processing of pre-18S ribosomal RNA and ribosome assembly. Binds to RNA. Required for female germline development, cell viability during eye development and for survival of dividing cells and epithelial cells during early wing disk development. The chain is KRR1 small subunit processome component homolog from Drosophila mojavensis (Fruit fly).